The sequence spans 192 residues: MNTDDVLAVFREAGAILEGHFILTSGLRSPVFLQKARVFMHADKTEKLCKALAEKIRAADLGPIDYVVGPAIGGLIPSYETSRHLGVPSVWVERENGVFRLRRFDVPKGARVVIVEDIVTTGLSIRETIDCMKDLGIEVVAAACIVDRSAGKADVGTRLISLAAYEVPAYPADKLPPELAAIPAVKPGSRNI.

A 5-phospho-alpha-D-ribose 1-diphosphate-binding site is contributed by 116–124; it reads EDIVTTGLS. Orotate contacts are provided by Thr-120 and Arg-148.

Belongs to the purine/pyrimidine phosphoribosyltransferase family. PyrE subfamily. Homodimer. Requires Mg(2+) as cofactor.

The enzyme catalyses orotidine 5'-phosphate + diphosphate = orotate + 5-phospho-alpha-D-ribose 1-diphosphate. It participates in pyrimidine metabolism; UMP biosynthesis via de novo pathway; UMP from orotate: step 1/2. Functionally, catalyzes the transfer of a ribosyl phosphate group from 5-phosphoribose 1-diphosphate to orotate, leading to the formation of orotidine monophosphate (OMP). The sequence is that of Orotate phosphoribosyltransferase from Brucella canis (strain ATCC 23365 / NCTC 10854 / RM-666).